The following is a 193-amino-acid chain: Xanthine phosphoribosyltransferase (193 aa).

Xanthine is bound by residues L20 and T27. A 5-phospho-alpha-D-ribose 1-diphosphate-binding site is contributed by 128–132 (ANGQA). K156 contacts xanthine.

Belongs to the purine/pyrimidine phosphoribosyltransferase family. Xpt subfamily. In terms of assembly, homodimer.

The protein resides in the cytoplasm. It carries out the reaction XMP + diphosphate = xanthine + 5-phospho-alpha-D-ribose 1-diphosphate. It participates in purine metabolism; XMP biosynthesis via salvage pathway; XMP from xanthine: step 1/1. Converts the preformed base xanthine, a product of nucleic acid breakdown, to xanthosine 5'-monophosphate (XMP), so it can be reused for RNA or DNA synthesis. The protein is Xanthine phosphoribosyltransferase of Streptococcus pneumoniae (strain CGSP14).